The primary structure comprises 361 residues: MSAAFDPSSYATQLDAKVARLRELLAPFGAPEPAVFDSPREHYRLRAEFRLWREDGQRHYAMFAPGEKHKAILIDDFPIASERINALMPRLKAAWQASEELGNRLFQVEFLTTLAGDAMITMCYHRPLDEAWEVEARQLAEALGVSVIGRSKGKRLVIGRDYAVEKLDVAGRVFSYRQPEGAFTQPNGAVNQKMLSWAFEAIGEREDDLLELYCGNGNFTLPLATRVRQVLATEISKTSVNAALSNLDENAVDNVRLVRLSAEELTQALNEVRPFRRLEGIDLKSYQFGTVFVDPPRAGMDPDTCELTRRFERILYISCNPETLAANIAQLQDTHRIERCALFDQFPYTHHMESGVLLVRR.

Positions 185, 213, 218, 234, and 294 each coordinate S-adenosyl-L-methionine. Cysteine 319 (nucleophile) is an active-site residue. Catalysis depends on glutamate 353, which acts as the Proton acceptor.

Belongs to the class I-like SAM-binding methyltransferase superfamily. RNA M5U methyltransferase family. TrmA subfamily.

The enzyme catalyses uridine(54) in tRNA + S-adenosyl-L-methionine = 5-methyluridine(54) in tRNA + S-adenosyl-L-homocysteine + H(+). It carries out the reaction uridine(341) in tmRNA + S-adenosyl-L-methionine = 5-methyluridine(341) in tmRNA + S-adenosyl-L-homocysteine + H(+). Its function is as follows. Dual-specificity methyltransferase that catalyzes the formation of 5-methyluridine at position 54 (m5U54) in all tRNAs, and that of position 341 (m5U341) in tmRNA (transfer-mRNA). In Pseudomonas putida (strain ATCC 47054 / DSM 6125 / CFBP 8728 / NCIMB 11950 / KT2440), this protein is tRNA/tmRNA (uracil-C(5))-methyltransferase.